The primary structure comprises 594 residues: MENNRNYFVAIALSVLILIAWQFFYVSPKMEKDRIAAEQAQQAQQTQQQPGAQPAAPGQALPGGAIPSAGESRDQAIGKSARVAIDTPALSGSINLTGARFDDLKLKGYRETVDPKSPVITLFSPAETADGYFTEIGYIGSDATGSVPGPQTTWTLSGGDKLTPSTPVTLSYTNDKGITFARTISVDDRYMFQVVDSIKNETAAPVSLSSYGRVTRFNKPTTPSIYVLHEGFVGVAGEHGLQEVGYSKVEDDEPVEPGKSTGGWLGITDKYWAATIVPPQATPFDIRFSHFADGRPRYQSDYKSDAVTVAPGQSVELKNLVFAGAKEVPVVDNYEVAYSIPNFDKLIDWGWFYFITKPMFKMMDFFFRLFGNFGIAILITTIVVKLIFFPLANKQYASMANMKKVQPKMEELKKKFGDDRMGLQQAMMQLYKEEKINPLAGCWPILIQIPVFFALYKVIYVTIEMRHAPFFGWIQDLSAPDPTTIINLFGLLPFEGPAFLHLGIWPIIMGVTMFLQMRMNPTPPDPTQAMLFTWMPVVFTFMLASFPAGLVIYWAWNNTLSILQQGIIMKRQGVKVELFDNLKSLFSKKPKPAE.

Residues Y7–S27 form a helical membrane-spanning segment. The interval A36–R73 is disordered. Low complexity predominate over residues A37 to A65. Transmembrane regions (helical) follow at residues L369 to F389, W443 to I463, L488 to I508, and F532 to I552.

Belongs to the OXA1/ALB3/YidC family. Type 1 subfamily. Interacts with the Sec translocase complex via SecD. Specifically interacts with transmembrane segments of nascent integral membrane proteins during membrane integration.

It localises to the cell inner membrane. Functionally, required for the insertion and/or proper folding and/or complex formation of integral membrane proteins into the membrane. Involved in integration of membrane proteins that insert both dependently and independently of the Sec translocase complex, as well as at least some lipoproteins. Aids folding of multispanning membrane proteins. This is Membrane protein insertase YidC from Rhizobium meliloti (strain 1021) (Ensifer meliloti).